Reading from the N-terminus, the 388-residue chain is 8-amino-7-oxononanoate synthase (388 aa).

R23 is a binding site for substrate. G110–F111 is a binding site for pyridoxal 5'-phosphate. Residue H135 participates in substrate binding. 3 residues coordinate pyridoxal 5'-phosphate: S181, H209, and T235. K238 is modified (N6-(pyridoxal phosphate)lysine). Position 352 (T352) interacts with substrate.

Belongs to the class-II pyridoxal-phosphate-dependent aminotransferase family. BioF subfamily. Homodimer. Requires pyridoxal 5'-phosphate as cofactor.

The catalysed reaction is 6-carboxyhexanoyl-[ACP] + L-alanine + H(+) = (8S)-8-amino-7-oxononanoate + holo-[ACP] + CO2. It functions in the pathway cofactor biosynthesis; biotin biosynthesis. Catalyzes the decarboxylative condensation of pimeloyl-[acyl-carrier protein] and L-alanine to produce 8-amino-7-oxononanoate (AON), [acyl-carrier protein], and carbon dioxide. The protein is 8-amino-7-oxononanoate synthase of Sodalis glossinidius (strain morsitans).